The following is a 294-amino-acid chain: Probable 3-hydroxyisobutyrate dehydrogenase (294 aa).

NAD(+)-binding positions include threonine 3 to aspartate 31 and threonine 93. Lysine 168 is a catalytic residue. Lysine 243 is an NAD(+) binding site.

This sequence belongs to the HIBADH-related family.

It carries out the reaction 3-hydroxy-2-methylpropanoate + NAD(+) = 2-methyl-3-oxopropanoate + NADH + H(+). It functions in the pathway amino-acid degradation; L-valine degradation. This is Probable 3-hydroxyisobutyrate dehydrogenase (mmsB) from Mycobacterium bovis (strain ATCC BAA-935 / AF2122/97).